The following is a 653-amino-acid chain: Pentatricopeptide repeat-containing protein At3g14730 (653 aa).

PPR repeat units follow at residues 59–93 (NVAT…GFLD), 95–119 (SPRA…VLVF), 125–159 (DVFG…GILP), 160–193 (DKYT…GFDS), 194–224 (DCYV…LPDR), 226–260 (DSVL…GVGV), 261–295 (SRHT…GSGS), 296–326 (DIVV…MDER), 327–361 (DLFT…GIRP), 362–396 (DIVT…GLLN), 401–431 (NEFI…MRVK), 432–466 (DSAS…GVKP), 467–497 (DEIT…METV), and 503–537 (TSDH…DNPV). Residues 538-613 (VWRSILSSCR…TPGCSWIVLK (76 aa)) form a type E motif region. The segment at 614-644 (NGVHTFFTGNQTHPEFKSIHDWLSLVISHMH) is type E(+) motif.

This sequence belongs to the PPR family. PCMP-E subfamily.

This chain is Pentatricopeptide repeat-containing protein At3g14730 (PCMP-E31), found in Arabidopsis thaliana (Mouse-ear cress).